The chain runs to 246 residues: Transcription factor A, mitochondrial (246 aa).

Residues 1–42 (MAFLRSMWGVLSALGRSGAAVCIGCGSRLRSPFSFVYLPKCF) constitute a mitochondrion transit peptide. The segment at residues 50–118 (PKKPVSSYLR…VYKEKISRFK (69 aa)) is a DNA-binding region (HMG box 1). Residues S55, S56, and S61 each carry the phosphoserine; by PKA modification. A Phosphothreonine modification is found at T122. Residues 155–219 (PKRPRSAYNV…RYHNEMKSWE (65 aa)) constitute a DNA-binding region (HMG box 2). Residue S160 is modified to Phosphoserine; by PKA. Phosphoserine is present on residues S193 and S195.

In terms of assembly, monomer; binds DNA as a monomer. Homodimer. Component of the mitochondrial transcription initiation complex, composed at least of TFB2M, TFAM and POLRMT. In this complex TFAM recruits POLRMT to the promoter whereas TFB2M induces structural changes in POLRMT to enable promoter opening and trapping of the DNA non-template strand. Upon metabolic stress, forms a complex composed of FOXO3, SIRT3, TFAM and POLRMT. Interacts with TFB1M and TFB2M. Interacts with CLPX; this enhances DNA-binding. In terms of processing, phosphorylation by PKA within the HMG box 1 impairs DNA binding and promotes degradation by the AAA+ Lon protease.

It localises to the mitochondrion. The protein resides in the mitochondrion matrix. The protein localises to the mitochondrion nucleoid. Binds to the mitochondrial light strand promoter and functions in mitochondrial transcription regulation. Component of the mitochondrial transcription initiation complex, composed at least of TFB2M, TFAM and POLRMT that is required for basal transcription of mitochondrial DNA. In this complex, TFAM recruits POLRMT to a specific promoter whereas TFB2M induces structural changes in POLRMT to enable promoter opening and trapping of the DNA non-template strand. Required for accurate and efficient promoter recognition by the mitochondrial RNA polymerase. Promotes transcription initiation from the HSP1 and the light strand promoter by binding immediately upstream of transcriptional start sites. Is able to unwind DNA. Bends the mitochondrial light strand promoter DNA into a U-turn shape via its HMG boxes. Required for maintenance of normal levels of mitochondrial DNA. May play a role in organizing and compacting mitochondrial DNA. The protein is Transcription factor A, mitochondrial of Trachypithecus cristatus (Silvered leaf-monkey).